Consider the following 211-residue polypeptide: Thymidylate kinase (211 aa).

10–17 is an ATP binding site; that stretch reads GPDGAGKT.

Belongs to the thymidylate kinase family.

It catalyses the reaction dTMP + ATP = dTDP + ADP. Phosphorylation of dTMP to form dTDP in both de novo and salvage pathways of dTTP synthesis. The protein is Thymidylate kinase of Lactococcus lactis subsp. cremoris (strain MG1363).